The following is a 292-amino-acid chain: ATP phosphoribosyltransferase (292 aa).

This sequence belongs to the ATP phosphoribosyltransferase family. Long subfamily. Mg(2+) serves as cofactor.

The protein localises to the cytoplasm. The enzyme catalyses 1-(5-phospho-beta-D-ribosyl)-ATP + diphosphate = 5-phospho-alpha-D-ribose 1-diphosphate + ATP. Its pathway is amino-acid biosynthesis; L-histidine biosynthesis; L-histidine from 5-phospho-alpha-D-ribose 1-diphosphate: step 1/9. Its activity is regulated as follows. Feedback inhibited by histidine. In terms of biological role, catalyzes the condensation of ATP and 5-phosphoribose 1-diphosphate to form N'-(5'-phosphoribosyl)-ATP (PR-ATP). Has a crucial role in the pathway because the rate of histidine biosynthesis seems to be controlled primarily by regulation of HisG enzymatic activity. The sequence is that of ATP phosphoribosyltransferase from Thermodesulfovibrio yellowstonii (strain ATCC 51303 / DSM 11347 / YP87).